Consider the following 297-residue polypeptide: Tyrosine recombinase XerD (297 aa).

Residues 1–86 (MKNLALIDLF…AMRKLFQYLY (86 aa)) form the Core-binding (CB) domain. The Tyr recombinase domain occupies 107-291 (RLPKYLTEQQ…AKERLKRLHE (185 aa)). Active-site residues include Arg147, Lys171, His243, Arg246, and His269. Catalysis depends on Tyr278, which acts as the O-(3'-phospho-DNA)-tyrosine intermediate.

Belongs to the 'phage' integrase family. XerD subfamily. Forms a cyclic heterotetrameric complex composed of two molecules of XerC and two molecules of XerD.

It is found in the cytoplasm. Site-specific tyrosine recombinase, which acts by catalyzing the cutting and rejoining of the recombining DNA molecules. The XerC-XerD complex is essential to convert dimers of the bacterial chromosome into monomers to permit their segregation at cell division. It also contributes to the segregational stability of plasmids. The chain is Tyrosine recombinase XerD from Haemophilus influenzae (strain ATCC 51907 / DSM 11121 / KW20 / Rd).